A 312-amino-acid chain; its full sequence is Calcium-independent mitochondrial carrier protein SCaMC-3L (312 aa).

3 Solcar repeats span residues 27 to 113 (GTLW…SKNF), 121 to 206 (QLFQ…LQCL), and 217 to 304 (PSGL…MKKT). Transmembrane regions (helical) follow at residues 33–50 (LLSG…TAPL), 88–107 (GNGI…FSVC), 131–144 (SLAV…INPM), 182–200 (YLPN…LAVY), 219–243 (GLVS…LTLV), and 279–298 (GMTP…YLVY).

It belongs to the mitochondrial carrier (TC 2.A.29) family. As to expression, mainly expressed in testis and at lesser levels in brain.

Its subcellular location is the mitochondrion inner membrane. It catalyses the reaction Mg(2+)(out) + phosphate(in) + ATP(out) = Mg(2+)(in) + phosphate(out) + ATP(in). The enzyme catalyses ADP(out) + phosphate(in) + H(+)(out) = ADP(in) + phosphate(out) + H(+)(in). Its function is as follows. Calcium-independent ATP-Mg/Pi exchanger that catalyzes the electroneutral exchange of Mg-ATP or free ADP against an hydrogenphosphate and participates in the net transport of adenine nucleotides across the mitochondria inner membrane. This Mus musculus (Mouse) protein is Calcium-independent mitochondrial carrier protein SCaMC-3L.